Here is a 659-residue protein sequence, read N- to C-terminus: Protein real-time (659 aa).

Residues 3–175 (QKFQSPVRVY…FIGQLREEGI (173 aa)) form the PRELI/MSF1 domain. One can recognise a CRAL-TRIO domain in the interval 286–462 (KPAVVVEHFP…FLGGPCKTMI (177 aa)). Ser-477 is subject to Phosphoserine. Residues 512 to 631 (HRNLYKSVDL…QLNVFYEVLS (120 aa)) form the GOLD domain.

As to expression, restricted to the developing gut and central nervous system (CNS).

The protein localises to the mitochondrion. This chain is Protein real-time (retm), found in Drosophila melanogaster (Fruit fly).